The sequence spans 70 residues: Large ribosomal subunit protein bL31 (70 aa).

4 residues coordinate Zn(2+): Cys-17, Cys-19, Cys-37, and Cys-40.

It belongs to the bacterial ribosomal protein bL31 family. Type A subfamily. As to quaternary structure, part of the 50S ribosomal subunit. The cofactor is Zn(2+).

Binds the 23S rRNA. In Clostridium acetobutylicum (strain ATCC 824 / DSM 792 / JCM 1419 / IAM 19013 / LMG 5710 / NBRC 13948 / NRRL B-527 / VKM B-1787 / 2291 / W), this protein is Large ribosomal subunit protein bL31.